A 446-amino-acid chain; its full sequence is Tryptophan dimethylallyltransferase (446 aa).

Residues 83–84 (IL) and E92 each bind L-tryptophan. The substrate site is built by R103, K189, and Y191. L-tryptophan contacts are provided by Y193 and R246. 5 residues coordinate substrate: R259, K261, Y263, Q345, and Y347.

It belongs to the tryptophan dimethylallyltransferase family. As to quaternary structure, homodimer.

It carries out the reaction L-tryptophan + dimethylallyl diphosphate = 4-(3-methylbut-2-enyl)-L-tryptophan + diphosphate. It functions in the pathway alkaloid biosynthesis; ergot alkaloid biosynthesis. Its function is as follows. Tryptophan dimethylallyltransferase; part of the gene cluster that mediates the biosynthesis of fungal ergot alkaloid. DmaW catalyzes the first step of ergot alkaloid biosynthesis by condensing dimethylallyl diphosphate (DMAP) and tryptophan to form 4-dimethylallyl-L-tryptophan. The second step is catalyzed by the methyltransferase easF that methylates 4-dimethylallyl-L-tryptophan in the presence of S-adenosyl-L-methionine, resulting in the formation of 4-dimethylallyl-L-abrine. The catalase easC and the FAD-dependent oxidoreductase easE then transform 4-dimethylallyl-L-abrine to chanoclavine-I which is further oxidized by easD in the presence of NAD(+), resulting in the formation of chanoclavine-I aldehyde. Chanoclavine-I aldehyde is the precursor of ergoamides and ergopeptines in Clavicipitaceae, and clavine-type alcaloids such as fumiclavine in Trichocomaceae. However, the metabolites downstream of chanoclavine-I aldehyde in Arthrodermataceae have not been identified yet. The chain is Tryptophan dimethylallyltransferase from Arthroderma otae (strain ATCC MYA-4605 / CBS 113480) (Microsporum canis).